An 827-amino-acid polypeptide reads, in one-letter code: Xanthomonalisin (827 aa).

The N-terminal stretch at 1-23 (MKIEKTALTVAIALAMSSLSAHA) is a signal peptide. Residues 24 to 237 (EDAWVSTHTQ…GPNVGTQAAA (214 aa)) constitute a propeptide, removed in mature form. The Peptidase S53 domain maps to 241-625 (AHHPQDFAAI…GKLNTYAQAN (385 aa)). Residues Glu312, Asp316, and Ser544 each act as charge relay system in the active site. Positions 585, 586, 601, 603, and 605 each coordinate Ca(2+). The 88-residue stretch at 635–722 (TNAPPVANFS…VTVSSSGGTG (88 aa)) folds into the PKD domain. Residues 636–827 (NAPPVANFSV…GVSLKATWTN (192 aa)) constitute a propeptide, removed in mature form.

Requires Ca(2+) as cofactor. Autocatalytically processed.

It localises to the secreted. The enzyme catalyses Cleavage of casein.. With respect to regulation, inhibited by 1,2-epoxy-3-(p-nitrophenoxy)propane (EPNP), but not by pepstatin, pepstatin Ac (S-PI) and diazoacetyl-DL-norleucine methyl ester (DAN). Not inhibited by metal ions. Functionally, pepstatin-insensitive serine-carboxyl proteinase. Shows activity on acid-denatured hemoglobin and on casein. This chain is Xanthomonalisin, found in Xanthomonas sp. (strain T-22).